Consider the following 239-residue polypeptide: Ribosomal RNA small subunit methyltransferase G (239 aa).

Residues glycine 77, phenylalanine 82, 128–129, and arginine 147 contribute to the S-adenosyl-L-methionine site; that span reads AE.

This sequence belongs to the methyltransferase superfamily. RNA methyltransferase RsmG family.

Its subcellular location is the cytoplasm. In terms of biological role, specifically methylates the N7 position of guanine in position 535 of 16S rRNA. This chain is Ribosomal RNA small subunit methyltransferase G, found in Bacillus cereus (strain G9842).